Here is a 260-residue protein sequence, read N- to C-terminus: 3-oxoadipate CoA-transferase subunit B (260 aa).

E51 is a catalytic residue.

Belongs to the 3-oxoacid CoA-transferase subunit B family. Heterotetramer composed of 2 A and 2 B subunits.

The enzyme catalyses 3-oxoadipate + succinyl-CoA = 3-oxoadipyl-CoA + succinate. It functions in the pathway aromatic compound metabolism; beta-ketoadipate pathway; acetyl-CoA and succinyl-CoA from 3-oxoadipate: step 1/2. This chain is 3-oxoadipate CoA-transferase subunit B (catJ), found in Pseudomonas knackmussii (strain DSM 6978 / CCUG 54928 / LMG 23759 / B13).